A 379-amino-acid chain; its full sequence is Retinoic acid receptor RXR-alpha-B (379 aa).

Positions 1-22 (MPVPEQKQTVQLSSPMNAVSSS) are enriched in polar residues. A disordered region spans residues 1 to 24 (MPVPEQKQTVQLSSPMNAVSSSED). The tract at residues 1–53 (MPVPEQKQTVQLSSPMNAVSSSEDIKPPLGLNGVMKVPAHRIGTLSLSLTKHI) is modulating. A DNA-binding region (nuclear receptor) is located at residues 51-126 (KHICAICGDR…MGMKREAVQE (76 aa)). Cys-54, Cys-57, Cys-71, and Cys-74 together coordinate Zn(2+). An NR C4-type zinc finger spans residues 54 to 74 (CAICGDRSSGKHYGVYSCEGC). The interval 79 to 84 (KRTVRK) is nuclear localization signal. Zn(2+) contacts are provided by Cys-90, Cys-96, Cys-106, and Cys-109. The NR C4-type zinc-finger motif lies at 90-109 (CRDNKDCMIDKRQRNRCQYC). The tract at residues 120-141 (KREAVQEERQRAKERSEAEFGG) is hinge. The region spanning 144 to 375 (NEDMPVEKIL…TFLMEMLEAP (232 aa)) is the NR LBD domain. Positions 233 and 244 each coordinate 9-cis-retinoate. 2 residues coordinate all-trans-retinoate: Arg-233 and Ala-244. Positions 265 to 285 (RVLTELVSKMRDMQMDKTELG) are required for nuclear export. Residues 364–375 (IDTFLMEMLEAP) form an AF-2 region.

Belongs to the nuclear hormone receptor family. NR2 subfamily. Homodimer. Heterodimer; with a rar molecule. Binds DNA preferentially as a rar/rxr heterodimer. Uniform expression from the blastula to mid-gastrula stages. At 12 hours post-fertilization (hpf), expressed strongly in the tail and weakly elsewhere. At 24 hpf, weak expression in the forebrain, eyes and pharyngeal endoderm and continued expression in the tail mesoderm. At 48 hpf, anterior expression limited to ventral cells underlying the head, medial expression in the pectoral fin bud mesoderm and continued tail expression.

Its subcellular location is the nucleus. Its function is as follows. Receptor for retinoic acid that acts as a transcription factor. Forms homo- or heterodimers with retinoic acid receptors (rars) and binds to target response elements in response to their ligands, all-trans or 9-cis retinoic acid, to regulate gene expression in various biological processes. The rar/rxr heterodimers bind to the retinoic acid response elements (RARE) composed of tandem 5'-AGGTCA-3' sites known as DR1-DR5 to regulate transcription. The high affinity ligand for rxrs is 9-cis retinoic acid. In the absence of ligand, the rar/rxr heterodimers associate with a multiprotein complex containing transcription corepressors that induce histone deacetylation, chromatin condensation and transcriptional suppression. On ligand binding, the corepressors dissociate from the receptors and coactivators are recruited leading to transcriptional activation. The polypeptide is Retinoic acid receptor RXR-alpha-B (rxrab) (Danio rerio (Zebrafish)).